The primary structure comprises 174 residues: Large ribosomal subunit protein uL16 (174 aa).

Belongs to the universal ribosomal protein uL16 family.

In Archaeoglobus fulgidus (strain ATCC 49558 / DSM 4304 / JCM 9628 / NBRC 100126 / VC-16), this protein is Large ribosomal subunit protein uL16.